The sequence spans 369 residues: Glycolate oxidase 5 (369 aa).

The FMN hydroxy acid dehydrogenase domain maps to 1–360; that stretch reads MGEITNVTEY…TRNHVITEAD (360 aa). A glyoxylate-binding site is contributed by Tyr-25. FMN contacts are provided by residues 78 to 80, Ser-107, 128 to 130, and Thr-156; these read PSA and QLY. Tyr-130 contributes to the glyoxylate binding site. A glyoxylate-binding site is contributed by Arg-165. Residues Lys-231 and Ser-253 each coordinate FMN. Glyoxylate is bound by residues His-255 and Arg-258. The active-site Proton acceptor is His-255. FMN is bound by residues 286 to 290 and 309 to 310; these read DGGVR and GR. Residues 367–369 carry the Microbody targeting signal motif; sequence SRL.

This sequence belongs to the FMN-dependent alpha-hydroxy acid dehydrogenase family. As to quaternary structure, homotetramer. It depends on FMN as a cofactor.

The protein resides in the peroxisome. The enzyme catalyses glycolate + O2 = glyoxylate + H2O2. The protein operates within photosynthesis; photorespiration; glycine from 2-phosphoglycolate: step 2/3. Its function is as follows. Catalyzes the oxidation of glycolate to glyoxylate, with a reduction of O2 to H2O2. Is a key enzyme in photorespiration in green plants. This Oryza sativa subsp. japonica (Rice) protein is Glycolate oxidase 5 (GLO5).